The sequence spans 270 residues: Replication protein A 32 kDa subunit (270 aa).

N-acetylmethionine is present on Met1. A phosphoserine; by PRKDC mark is found at Ser4 and Ser8. Thr21 is modified (phosphothreonine; by PRKDC). The interval 22–41 is disordered; that stretch reads QSPGGFGSPTPSQAEKKSRA. Ser23 bears the Phosphoserine; by CDK2 mark. Residue Ser29 is modified to Phosphoserine; by CDK1. At Ser33 the chain carries Phosphoserine; by PRKDC. Glycyl lysine isopeptide (Lys-Gly) (interchain with G-Cter in ubiquitin) cross-links involve residues Lys37 and Lys38. The segment at residues 74-148 is a DNA-binding region (OB); sequence VTIVGIIRHA…KSLVAFKIIP (75 aa). Positions 187 to 270 are interaction with RAD52, TIPIN, UNG and XPA; that stretch reads GMGEPGNFSG…DDHFKSTDAE (84 aa).

Belongs to the replication factor A protein 2 family. In terms of assembly, component of the replication protein A complex (RPA/RP-A), a heterotrimeric complex composed of RPA1, RPA2 and RPA3. Interacts with PRPF19; the PRP19-CDC5L complex is recruited to the sites of DNA repair where it ubiquitinates the replication protein A complex (RPA). Interacts with SERTAD3. Interacts with TIPIN. Interacts with TIMELESS. Interacts with PPP4R2; the interaction is direct, DNA damage-dependent and mediates the recruitment of the PP4 catalytic subunit PPP4C. Interacts (hyperphosphorylated) with RAD51. Interacts with SMARCAL1; the interaction is direct and mediates the recruitment to the RPA complex of SMARCAL1. Interacts with RAD52 and XPA; those interactions are direct and associate RAD52 and XPA to the RPA complex. Interacts with FBH1. Interacts with ETAA1; the interaction is direct and promotes ETAA1 recruitment at stalled replication forks. Interacts with DDI2. Interacts (in unphosphorylated form via N-terminus) with EIF4EBP3; the interaction enhances EIF4EBP3-mediated inhibition of EIF4E-mediated mRNA nuclear export. Interacts with nuclear UNG (isoform 2); this interaction mediates UNG recruitment to RPA-coated single-stranded DNA at stalled replication forks. In terms of processing, differentially phosphorylated throughout the cell cycle, becoming phosphorylated at the G1-S transition and dephosphorylated in late mitosis. Mainly phosphorylated at Ser-23 and Ser-29, by cyclin A-CDK2 and cyclin B-CDK1, respectively during DNA replication and mitosis. Dephosphorylation may require the serine/threonine-protein phosphatase 4. Phosphorylation at Ser-23 and Ser-29 is a prerequisite for further phosphorylation. Becomes hyperphosphorylated on additional residues including Ser-4, Ser-8, Thr-21 and Ser-33 in response to DNA damage. Hyperphosphorylation is mediated by ATM, ATR and PRKDC. Primarily recruited to DNA repair nuclear foci as a hypophosphorylated form it undergoes subsequent hyperphosphorylation, catalyzed by ATR. Hyperphosphorylation is required for RAD51 recruitment to chromatin and efficient DNA repair. Phosphorylation at Thr-21 depends upon RFWD3 presence. DNA damage-induced 'Lys-63'-linked polyubiquitination by PRPF19 mediates ATRIP recruitment to the RPA complex at sites of DNA damage and activation of ATR. Ubiquitinated by RFWD3 at stalled replication forks in response to DNA damage: ubiquitination by RFWD3 does not lead to degradation by the proteasome and promotes removal of the RPA complex from stalled replication forks, promoting homologous recombination.

Its subcellular location is the nucleus. The protein resides in the PML body. Functionally, as part of the heterotrimeric replication protein A complex (RPA/RP-A), binds and stabilizes single-stranded DNA intermediates, that form during DNA replication or upon DNA stress. It prevents their reannealing and in parallel, recruits and activates different proteins and complexes involved in DNA metabolism. Thereby, it plays an essential role both in DNA replication and the cellular response to DNA damage. In the cellular response to DNA damage, the RPA complex controls DNA repair and DNA damage checkpoint activation. Through recruitment of ATRIP activates the ATR kinase a master regulator of the DNA damage response. It is required for the recruitment of the DNA double-strand break repair factors RAD51 and RAD52 to chromatin in response to DNA damage. Also recruits to sites of DNA damage proteins like XPA and XPG that are involved in nucleotide excision repair and is required for this mechanism of DNA repair. Also plays a role in base excision repair (BER) probably through interaction with UNG. Also recruits SMARCAL1/HARP, which is involved in replication fork restart, to sites of DNA damage. May also play a role in telomere maintenance. The protein is Replication protein A 32 kDa subunit (Rpa2) of Rattus norvegicus (Rat).